The following is a 72-amino-acid chain: UPF0270 protein ETA_31870 (72 aa).

This sequence belongs to the UPF0270 family.

This is UPF0270 protein ETA_31870 from Erwinia tasmaniensis (strain DSM 17950 / CFBP 7177 / CIP 109463 / NCPPB 4357 / Et1/99).